A 702-amino-acid chain; its full sequence is MA3 DOMAIN-CONTAINING TRANSLATION REGULATORY FACTOR 3 (702 aa).

Positions 1 to 100 are disordered; it reads MEGFLTDQQR…PNDPNYDSGE (100 aa). The span at 53–65 shows a compositional bias: basic residues; the sequence is VKHRRSHAGRSIR. Over residues 81–91 the composition is skewed to basic and acidic residues; that stretch reads IDTDGDYHIDP. The region spanning 116-237 is the MI 1 domain; that stretch reads DYKKAAASII…PPAFLPRAAK (122 aa). The Nuclear localization signal 1 motif lies at 267–274; it reads ERRWGGQT. 3 MI domains span residues 280–401, 414–535, and 577–697; these read EVKK…PSGE, RFKE…EISS, and DAKD…SLTE. Positions 615–622 match the Nuclear localization signal 2 motif; that stretch reads VKKALVMG.

This sequence belongs to the PDCD4 family. Interacts with EIN2, ETR2 and EIN4. Binds to EIF4A1. The association with ribosomes is modulated by cellular energy status and TOR activity. As to expression, mostly expressed in vegetative tissues, such as leaves and stems, and, to a lower extent, in roots and reproductive tissues, such as flower buds and flowers. Expressed in seedlings, roots, cauline leaf tips and flowers.

It localises to the nucleus. The protein resides in the cytoplasm. It is found in the cytosol. Its function is as follows. Involved in target of rapamycin (TOR)-regulated translation control, especially under energy-deficient conditions. Involved in the regulation of the ethylene-mediated signaling pathway. Involved in salt stress responses. Reduced cotyledons size and early flowering. The sequence is that of MA3 DOMAIN-CONTAINING TRANSLATION REGULATORY FACTOR 3 from Arabidopsis thaliana (Mouse-ear cress).